The chain runs to 672 residues: Serine/threonine-protein kinase ppk16 (672 aa).

One can recognise a Protein kinase domain in the interval Tyr-31–Phe-279. ATP contacts are provided by residues Val-37 to Val-45 and Lys-60. Catalysis depends on Asp-148, which acts as the Proton acceptor. At Ser-231 the chain carries Phosphoserine. The span at Val-375–Ser-384 shows a compositional bias: polar residues. 4 disordered regions span residues Val-375–Asn-396, Asp-416–Leu-436, Asn-464–Val-572, and Ser-632–Leu-672. The span at Asn-472–Pro-487 shows a compositional bias: polar residues. Low complexity predominate over residues Ser-508–Asn-523. Over residues Leu-531–Thr-541 the composition is skewed to polar residues. Low complexity-rich tracts occupy residues Arg-549 to Val-572 and Ser-639 to Ser-649.

It belongs to the protein kinase superfamily. Ser/Thr protein kinase family.

It localises to the cytoplasm. The enzyme catalyses L-seryl-[protein] + ATP = O-phospho-L-seryl-[protein] + ADP + H(+). The catalysed reaction is L-threonyl-[protein] + ATP = O-phospho-L-threonyl-[protein] + ADP + H(+). In terms of biological role, has a role in meiosis. The polypeptide is Serine/threonine-protein kinase ppk16 (ppk16) (Schizosaccharomyces pombe (strain 972 / ATCC 24843) (Fission yeast)).